The primary structure comprises 444 residues: Ubiquitin carboxyl-terminal hydrolase MINDY-3 (444 aa).

Cys51 acts as the Nucleophile in catalysis. Position 124 is a phosphoserine (Ser124). The Proton acceptor role is filled by His286.

The protein belongs to the MINDY deubiquitinase family. FAM188 subfamily. Interacts with COPS5.

It is found in the nucleus. It catalyses the reaction Thiol-dependent hydrolysis of ester, thioester, amide, peptide and isopeptide bonds formed by the C-terminal Gly of ubiquitin (a 76-residue protein attached to proteins as an intracellular targeting signal).. Its function is as follows. Hydrolase that can remove 'Lys-48'-linked conjugated ubiquitin from proteins. This chain is Ubiquitin carboxyl-terminal hydrolase MINDY-3, found in Mus musculus (Mouse).